Reading from the N-terminus, the 966-residue chain is Catenin alpha-2 (966 aa).

Basic and acidic residues predominate over residues 924–940 (PEKKPLVKREKPEEYQT). The segment at 924–952 (PEKKPLVKREKPEEYQTRVRRGSQKKHIS) is disordered. Residues 941–951 (RVRRGSQKKHI) show a composition bias toward basic residues.

It belongs to the vinculin/alpha-catenin family.

It is found in the cell membrane. It localises to the cytoplasm. The protein localises to the cytoskeleton. The protein resides in the cell junction. Its subcellular location is the adherens junction. It is found in the cell projection. It localises to the axon. The protein localises to the nucleus. Functionally, may function as a linker between cadherin adhesion receptors and the cytoskeleton to regulate cell-cell adhesion and differentiation in the nervous system. This Xenopus laevis (African clawed frog) protein is Catenin alpha-2 (ctnna2).